The chain runs to 122 residues: Large ribosomal subunit protein uL29 (122 aa).

S12 bears the Phosphoserine mark.

The protein belongs to the universal ribosomal protein uL29 family. Component of the large ribosomal subunit (LSU). Mature yeast ribosomes consist of a small (40S) and a large (60S) subunit. The 40S small subunit contains 1 molecule of ribosomal RNA (18S rRNA) and at least 33 different proteins. The large 60S subunit contains 3 rRNA molecules (25S, 5.8S and 5S rRNA) and at least 46 different proteins. uL29 is associated with the polypeptide exit tunnel.

The protein localises to the cytoplasm. Its subcellular location is the nucleus. The protein resides in the nucleolus. Functionally, component of the ribosome, a large ribonucleoprotein complex responsible for the synthesis of proteins in the cell. The small ribosomal subunit (SSU) binds messenger RNAs (mRNAs) and translates the encoded message by selecting cognate aminoacyl-transfer RNA (tRNA) molecules. The large subunit (LSU) contains the ribosomal catalytic site termed the peptidyl transferase center (PTC), which catalyzes the formation of peptide bonds, thereby polymerizing the amino acids delivered by tRNAs into a polypeptide chain. The nascent polypeptides leave the ribosome through a tunnel in the LSU and interact with protein factors that function in enzymatic processing, targeting, and the membrane insertion of nascent chains at the exit of the ribosomal tunnel. The polypeptide is Large ribosomal subunit protein uL29 (rpl35) (Schizosaccharomyces pombe (strain 972 / ATCC 24843) (Fission yeast)).